Reading from the N-terminus, the 470-residue chain is FAD-dependent monooxygenase nvfK (470 aa).

The signal sequence occupies residues 1–23; sequence MEKAKFKVVIVGGSITGLTLAHC. The FAD site is built by glutamate 35, glycine 49, and arginine 108. Asparagine 121 is a glycosylation site (N-linked (GlcNAc...) asparagine). The active site involves tyrosine 216. 2 residues coordinate FAD: aspartate 308 and alanine 321. Residues 450–470 traverse the membrane as a helical segment; it reads ILMSIVLVAPAWVYIFSSLVW.

This sequence belongs to the paxM FAD-dependent monooxygenase family. The cofactor is FAD.

Its subcellular location is the membrane. The enzyme catalyses (3R)-3-farnesyl-6-hydroxy-2,3,5-trimethyl-4-oxocyclohexa-1,5-diene-1-carboxylate + 2-oxoglutarate + O2 = (3R)-[(10S)-11-epoxyfarnesyl]-2,3,5-trimethyl-6-oxido-4-oxocyclohexa-1,5-diene-1-carboxylate + succinate + CO2. It participates in secondary metabolite biosynthesis; terpenoid biosynthesis. FAD-dependent monooxygenase; part of the gene cluster that mediates the biosynthesis of novofumigatonin, a heavily oxygenated meroterpenoid containing a unique orthoester moiety. The first step of the pathway is the synthesis of 3,5-dimethylorsellinic acid (DMOA) by the polyketide synthase nvfA via condensation of one acetyl-CoA starter unit with 3 malonyl-CoA units and 2 methylations. DMOA is then converted to farnesyl-DMOA by the farnesyltransferase nvfB. Epoxydation by FAD-dependent monooxygenase nvfK, followed by a protonation-initiated cyclization catalyzed by the terpene cyclase nvfL leads to the production of asnavolin H. The short chain dehydrogenase nvfC then as a 3-OH dehydrogenase of asnovolin H to yield chemesin D. There are two branches to synthesize asnovolin A from chemesin D. In one branch, chemesin D undergoes Baeyer-Villiger oxidation by nvfH, methylation by nvfJ, and enoyl reduction by the nvfM D enoylreductase that reduces the double bond between C-5'and C-6', to form respectively asnovolin I, asnovolin K, and asnovolin A. In the other branch, the methylation precedes the Baeyer-Villiger oxidation and the enoyl reduction to yield asnovolin A via the asnovolin J intermediate. Asnovolin A is further converted to fumigatonoid A by the Fe(II)/2-oxoglutarate-dependent dioxygenase nvfI that catalyzes an endoperoxidation reaction. The alpha/beta hydrolase nvfD then acts as an epimerase that converts fumigatonoid A to its C-5' epimer, which then undergoes spontaneous or nvfD-catalyzed lactonization. The following step utilizes the ketoreductase nvfG to produce fumigatonoid B. The dioxygenase nvfE further converts fumigatonoid B into fumigatonoid C. Finally the Fe(II)/2-oxoglutarate-dependent dioxygenase nvfF catalyzes two rounds of oxidation to transform fumigatonoid C into the end product, novofumigatonin A. This chain is FAD-dependent monooxygenase nvfK, found in Aspergillus novofumigatus (strain IBT 16806).